The primary structure comprises 571 residues: Phosphoribosylaminoimidazole carboxylase (571 aa).

S37 bears the Phosphoserine mark. Residues 110 to 298 (KEHLIKNGIA…QFEAHLRSIL (189 aa)) form the ATP-grasp domain. 138-193 (GRDLGFPFVLKSRTLAYDGRGNFVVKNKEMIPEALEVLKDRPLYAEKWAPFTKELA) contacts ATP.

This sequence in the C-terminal section; belongs to the AIR carboxylase family. Class I subfamily.

It carries out the reaction 5-amino-1-(5-phospho-D-ribosyl)imidazole-4-carboxylate + H(+) = 5-amino-1-(5-phospho-beta-D-ribosyl)imidazole + CO2. It participates in purine metabolism; IMP biosynthesis via de novo pathway; 5-amino-1-(5-phospho-D-ribosyl)imidazole-4-carboxylate from 5-amino-1-(5-phospho-D-ribosyl)imidazole (carboxylase route): step 1/1. This Saccharomyces cerevisiae (strain ATCC 204508 / S288c) (Baker's yeast) protein is Phosphoribosylaminoimidazole carboxylase (ADE2).